The sequence spans 199 residues: Photosystem I reaction center subunit XI (199 aa).

2 consecutive transmembrane segments (helical) span residues Ile108–Leu128 and Phe165–Leu185.

Belongs to the PsaL family.

Its subcellular location is the cellular thylakoid membrane. The sequence is that of Photosystem I reaction center subunit XI from Prochlorococcus marinus (strain MIT 9515).